A 138-amino-acid polypeptide reads, in one-letter code: ATP synthase epsilon chain (138 aa).

This sequence belongs to the ATPase epsilon chain family. As to quaternary structure, F-type ATPases have 2 components, CF(1) - the catalytic core - and CF(0) - the membrane proton channel. CF(1) has five subunits: alpha(3), beta(3), gamma(1), delta(1), epsilon(1). CF(0) has three main subunits: a, b and c.

The protein localises to the cell inner membrane. In terms of biological role, produces ATP from ADP in the presence of a proton gradient across the membrane. In Geotalea daltonii (strain DSM 22248 / JCM 15807 / FRC-32) (Geobacter daltonii), this protein is ATP synthase epsilon chain.